Here is a 187-residue protein sequence, read N- to C-terminus: Elongation factor P (187 aa).

The protein belongs to the elongation factor P family.

Its subcellular location is the cytoplasm. It functions in the pathway protein biosynthesis; polypeptide chain elongation. Functionally, involved in peptide bond synthesis. Stimulates efficient translation and peptide-bond synthesis on native or reconstituted 70S ribosomes in vitro. Probably functions indirectly by altering the affinity of the ribosome for aminoacyl-tRNA, thus increasing their reactivity as acceptors for peptidyl transferase. This Brachyspira hyodysenteriae (strain ATCC 49526 / WA1) protein is Elongation factor P.